The sequence spans 380 residues: O-phospho-L-seryl-tRNA:Cys-tRNA synthase (380 aa).

Pyridoxal 5'-phosphate contacts are provided by residues 86–87 (AR), Asn192, and 215–217 (SGH). The residue at position 218 (Lys218) is an N6-(pyridoxal phosphate)lysine.

This sequence belongs to the SepCysS family. As to quaternary structure, homodimer. Interacts with SepRS. The cofactor is pyridoxal 5'-phosphate.

The catalysed reaction is O-phospho-L-seryl-tRNA(Cys) + hydrogen sulfide + H(+) = L-cysteinyl-tRNA(Cys) + phosphate. Its function is as follows. Converts O-phospho-L-seryl-tRNA(Cys) (Sep-tRNA(Cys)) to L-cysteinyl-tRNA(Cys) (Cys-tRNA(Cys)). This Methanococcus maripaludis (strain DSM 14266 / JCM 13030 / NBRC 101832 / S2 / LL) protein is O-phospho-L-seryl-tRNA:Cys-tRNA synthase.